We begin with the raw amino-acid sequence, 561 residues long: 2-methylisocitrate lyase, mitochondrial (561 aa).

The tract at residues 154–177 (KAQSMHDRKQWDTRRKMSPDERSK) is disordered. The segment covering 157–177 (SMHDRKQWDTRRKMSPDERSK) has biased composition (basic and acidic residues). Residue Cys228 is part of the active site.

This sequence belongs to the isocitrate lyase/PEP mutase superfamily. Isocitrate lyase family. The cofactor is Mg(2+).

The protein resides in the mitochondrion matrix. It carries out the reaction (2S,3R)-3-hydroxybutane-1,2,3-tricarboxylate = pyruvate + succinate. It participates in organic acid metabolism; propanoate degradation. Its function is as follows. Component of the methylcitrate cycle that catalyzes the formation of pyruvate and succinate from 2-methylisocitrate during the metabolism of endogenous propionyl-CoA. Plays an important role for growth and development, but also in antagonism, root colonization and induction of defense responses in plants. The sequence is that of 2-methylisocitrate lyase, mitochondrial from Hypocrea atroviridis (strain ATCC 20476 / IMI 206040) (Trichoderma atroviride).